A 443-amino-acid chain; its full sequence is Probable D-serine dehydratase (443 aa).

Position 116 is an N6-(pyridoxal phosphate)lysine (Lys116).

Belongs to the serine/threonine dehydratase family. DsdA subfamily. Requires pyridoxal 5'-phosphate as cofactor.

It carries out the reaction D-serine = pyruvate + NH4(+). The sequence is that of Probable D-serine dehydratase from Bacillus cereus (strain B4264).